We begin with the raw amino-acid sequence, 187 residues long: Elongation factor P (187 aa).

Belongs to the elongation factor P family.

The protein resides in the cytoplasm. It functions in the pathway protein biosynthesis; polypeptide chain elongation. In terms of biological role, involved in peptide bond synthesis. Stimulates efficient translation and peptide-bond synthesis on native or reconstituted 70S ribosomes in vitro. Probably functions indirectly by altering the affinity of the ribosome for aminoacyl-tRNA, thus increasing their reactivity as acceptors for peptidyl transferase. The polypeptide is Elongation factor P (Nocardia farcinica (strain IFM 10152)).